An 89-amino-acid polypeptide reads, in one-letter code: Small ribosomal subunit protein uS15 (89 aa).

Belongs to the universal ribosomal protein uS15 family. Part of the 30S ribosomal subunit. Forms a bridge to the 50S subunit in the 70S ribosome, contacting the 23S rRNA.

One of the primary rRNA binding proteins, it binds directly to 16S rRNA where it helps nucleate assembly of the platform of the 30S subunit by binding and bridging several RNA helices of the 16S rRNA. In terms of biological role, forms an intersubunit bridge (bridge B4) with the 23S rRNA of the 50S subunit in the ribosome. In Chloroflexus aurantiacus (strain ATCC 29366 / DSM 635 / J-10-fl), this protein is Small ribosomal subunit protein uS15.